The following is a 229-amino-acid chain: Probable septum site-determining protein MinC (229 aa).

This sequence belongs to the MinC family. Interacts with MinD and FtsZ.

In terms of biological role, cell division inhibitor that blocks the formation of polar Z ring septums. Rapidly oscillates between the poles of the cell to destabilize FtsZ filaments that have formed before they mature into polar Z rings. Prevents FtsZ polymerization. The sequence is that of Probable septum site-determining protein MinC from Ruminiclostridium cellulolyticum (strain ATCC 35319 / DSM 5812 / JCM 6584 / H10) (Clostridium cellulolyticum).